The primary structure comprises 152 residues: Xanthine-guanine phosphoribosyltransferase (152 aa).

5-phospho-alpha-D-ribose 1-diphosphate-binding positions include 37 to 38 and 88 to 96; these read RG and DDLVDTGNT. Position 89 (Asp89) interacts with Mg(2+). Guanine is bound by residues Asp92 and Ile135. Xanthine is bound by residues Asp92 and Ile135. GMP is bound by residues 92–96 and 134–135; these read DTGNT and WI.

This sequence belongs to the purine/pyrimidine phosphoribosyltransferase family. XGPT subfamily. In terms of assembly, homotetramer. The cofactor is Mg(2+).

It is found in the cell inner membrane. It carries out the reaction GMP + diphosphate = guanine + 5-phospho-alpha-D-ribose 1-diphosphate. The enzyme catalyses XMP + diphosphate = xanthine + 5-phospho-alpha-D-ribose 1-diphosphate. It catalyses the reaction IMP + diphosphate = hypoxanthine + 5-phospho-alpha-D-ribose 1-diphosphate. The protein operates within purine metabolism; GMP biosynthesis via salvage pathway; GMP from guanine: step 1/1. It participates in purine metabolism; XMP biosynthesis via salvage pathway; XMP from xanthine: step 1/1. Functionally, purine salvage pathway enzyme that catalyzes the transfer of the ribosyl-5-phosphate group from 5-phospho-alpha-D-ribose 1-diphosphate (PRPP) to the N9 position of the 6-oxopurines guanine and xanthine to form the corresponding ribonucleotides GMP (guanosine 5'-monophosphate) and XMP (xanthosine 5'-monophosphate), with the release of PPi. To a lesser extent, also acts on hypoxanthine. The protein is Xanthine-guanine phosphoribosyltransferase of Actinobacillus succinogenes (strain ATCC 55618 / DSM 22257 / CCUG 43843 / 130Z).